We begin with the raw amino-acid sequence, 143 residues long: ATP synthase subunit b', chloroplastic (143 aa).

The helical transmembrane segment at 12 to 31 threads the bilayer; sequence LPVMGLQVVLLSWLLEQILY.

This sequence belongs to the ATPase B chain family. F-type ATPases have 2 components, F(1) - the catalytic core - and F(0) - the membrane proton channel. F(1) has five subunits: alpha(3), beta(3), gamma(1), delta(1), epsilon(1). F(0) has four main subunits: a(1), b(1), b'(1) and c(10-14). The alpha and beta chains form an alternating ring which encloses part of the gamma chain. F(1) is attached to F(0) by a central stalk formed by the gamma and epsilon chains, while a peripheral stalk is formed by the delta, b and b' chains.

Its subcellular location is the plastid. The protein localises to the chloroplast thylakoid membrane. F(1)F(0) ATP synthase produces ATP from ADP in the presence of a proton or sodium gradient. F-type ATPases consist of two structural domains, F(1) containing the extramembraneous catalytic core and F(0) containing the membrane proton channel, linked together by a central stalk and a peripheral stalk. During catalysis, ATP synthesis in the catalytic domain of F(1) is coupled via a rotary mechanism of the central stalk subunits to proton translocation. Functionally, component of the F(0) channel, it forms part of the peripheral stalk, linking F(1) to F(0). The b'-subunit is a diverged and duplicated form of b found in plants and photosynthetic bacteria. This chain is ATP synthase subunit b', chloroplastic, found in Cyanidioschyzon merolae (strain NIES-3377 / 10D) (Unicellular red alga).